Reading from the N-terminus, the 210-residue chain is Large ribosomal subunit protein uL4 (210 aa).

A compositionally biased stretch (polar residues) spans 41–51 (ANARQGTQSTK). Disordered regions lie at residues 41 to 60 (ANARQGTQSTKTRGEVQGSS) and 67 to 98 (KGTGNARMGTNRSPVRRHGGVAFGPRPRDFSK).

It belongs to the universal ribosomal protein uL4 family. In terms of assembly, part of the 50S ribosomal subunit.

In terms of biological role, one of the primary rRNA binding proteins, this protein initially binds near the 5'-end of the 23S rRNA. It is important during the early stages of 50S assembly. It makes multiple contacts with different domains of the 23S rRNA in the assembled 50S subunit and ribosome. Forms part of the polypeptide exit tunnel. In Dehalococcoides mccartyi (strain ATCC BAA-2266 / KCTC 15142 / 195) (Dehalococcoides ethenogenes (strain 195)), this protein is Large ribosomal subunit protein uL4.